Reading from the N-terminus, the 571-residue chain is Proline--tRNA ligase (571 aa).

The protein belongs to the class-II aminoacyl-tRNA synthetase family. ProS type 1 subfamily. In terms of assembly, homodimer.

The protein localises to the cytoplasm. It catalyses the reaction tRNA(Pro) + L-proline + ATP = L-prolyl-tRNA(Pro) + AMP + diphosphate. Functionally, catalyzes the attachment of proline to tRNA(Pro) in a two-step reaction: proline is first activated by ATP to form Pro-AMP and then transferred to the acceptor end of tRNA(Pro). As ProRS can inadvertently accommodate and process non-cognate amino acids such as alanine and cysteine, to avoid such errors it has two additional distinct editing activities against alanine. One activity is designated as 'pretransfer' editing and involves the tRNA(Pro)-independent hydrolysis of activated Ala-AMP. The other activity is designated 'posttransfer' editing and involves deacylation of mischarged Ala-tRNA(Pro). The misacylated Cys-tRNA(Pro) is not edited by ProRS. The polypeptide is Proline--tRNA ligase (Aliivibrio fischeri (strain MJ11) (Vibrio fischeri)).